The primary structure comprises 345 residues: NADPH-dependent curcumin reductase (345 aa).

A compositionally biased stretch (basic residues) spans 1-10; sequence MGQQKQRNRR. The interval 1–24 is disordered; it reads MGQQKQRNRRWVLASRPHGAPVPE. NADP(+)-binding residues include Lys186, Asn225, and Asn333.

In terms of assembly, homodimer.

The enzyme catalyses tetrahydrocurcumin + 2 NADP(+) = curcumin + 2 NADPH + 2 H(+). It carries out the reaction tetrahydrocurcumin + NADP(+) = dihydrocurcumin + NADPH + H(+). It catalyses the reaction dihydrocurcumin + NADP(+) = curcumin + NADPH + H(+). Inhibited by thiol-specific reagents (p-chloromercuribenzoate and 5,5'-dithio-bis-2-nitrobenzoate). In terms of biological role, catalyzes the metal-independent reduction of curcumin to dihydrocurcumin (DHC) as an intermediate product, followed by further reduction to tetrahydrocurcumin (THC) as an end product. It also acts on 3-octene-2-one, 3-hepten-2-one, resveratrol, and trans-2-octenal. This chain is NADPH-dependent curcumin reductase, found in Escherichia coli (strain K12).